The sequence spans 347 residues: tRNA N6-adenosine threonylcarbamoyltransferase (347 aa).

Fe cation contacts are provided by His-111 and His-115. Substrate contacts are provided by residues 134-138, Asp-167, Gly-180, and Asn-276; that span reads LVSGG. Asp-304 serves as a coordination point for Fe cation.

The protein belongs to the KAE1 / TsaD family. It depends on Fe(2+) as a cofactor.

Its subcellular location is the cytoplasm. It carries out the reaction L-threonylcarbamoyladenylate + adenosine(37) in tRNA = N(6)-L-threonylcarbamoyladenosine(37) in tRNA + AMP + H(+). Required for the formation of a threonylcarbamoyl group on adenosine at position 37 (t(6)A37) in tRNAs that read codons beginning with adenine. Is involved in the transfer of the threonylcarbamoyl moiety of threonylcarbamoyl-AMP (TC-AMP) to the N6 group of A37, together with TsaE and TsaB. TsaD likely plays a direct catalytic role in this reaction. In Nitrosospira multiformis (strain ATCC 25196 / NCIMB 11849 / C 71), this protein is tRNA N6-adenosine threonylcarbamoyltransferase.